Reading from the N-terminus, the 684-residue chain is ATP-dependent DNA helicase RecG (684 aa).

The wedge domain stretch occupies residues 51 to 148 (RHIASMATLQ…ADVPQFQAPH (98 aa)). Residues 278–439 (DLARHRPMRR…VHADLEVSVI (162 aa)) enclose the Helicase ATP-binding domain. 291-298 (GDVGSGKT) lines the ATP pocket. The DEAH box signature appears at 392–395 (DEQH).

It belongs to the helicase family. RecG subfamily. Monomer.

The enzyme catalyses Couples ATP hydrolysis with the unwinding of duplex DNA by translocating in the 3'-5' direction.. It carries out the reaction ATP + H2O = ADP + phosphate + H(+). Functionally, plays a critical role in recombination and DNA repair. Helps process Holliday junction intermediates to mature products by catalyzing branch migration. Has replication fork regression activity, unwinds stalled or blocked replication forks to make a HJ that can be resolved. Has a DNA unwinding activity characteristic of a DNA helicase with 3'-5' polarity. This Acidithiobacillus ferridurans protein is ATP-dependent DNA helicase RecG.